Consider the following 121-residue polypeptide: MDWYLKVLKNYVGFRGRARRKEYWMFILVNIIFTFVLGLLDKMLGWQRAGGEGILTTIYGILVFLPWWAVQFRRLHDTDRSAWWALLFLIPFIGWLIIIVFNCQAGTPGENRFGPDPKLEP.

At 1–23 (MDWYLKVLKNYVGFRGRARRKEY) the chain is on the periplasmic side. Residues 24 to 44 (WMFILVNIIFTFVLGLLDKML) traverse the membrane as a helical segment. Over 45 to 49 (GWQRA) the chain is Cytoplasmic. A helical transmembrane segment spans residues 50-70 (GGEGILTTIYGILVFLPWWAV). Over 71 to 80 (QFRRLHDTDR) the chain is Periplasmic. Residues 81–101 (SAWWALLFLIPFIGWLIIIVF) traverse the membrane as a helical segment. Topologically, residues 102 to 121 (NCQAGTPGENRFGPDPKLEP) are cytoplasmic.

The protein to E.coli YhaI.

The protein resides in the cell inner membrane. This chain is Inner membrane protein YhaH (yhaH), found in Escherichia coli O157:H7.